The sequence spans 319 residues: tRNA dimethylallyltransferase (319 aa).

16 to 23 serves as a coordination point for ATP; the sequence is GPTASGKS. 18 to 23 is a binding site for substrate; sequence TASGKS. The interaction with substrate tRNA stretch occupies residues 46–49; that stretch reads DSMV.

Belongs to the IPP transferase family. In terms of assembly, monomer. Mg(2+) serves as cofactor.

It carries out the reaction adenosine(37) in tRNA + dimethylallyl diphosphate = N(6)-dimethylallyladenosine(37) in tRNA + diphosphate. Functionally, catalyzes the transfer of a dimethylallyl group onto the adenine at position 37 in tRNAs that read codons beginning with uridine, leading to the formation of N6-(dimethylallyl)adenosine (i(6)A). The chain is tRNA dimethylallyltransferase from Cutibacterium acnes (strain DSM 16379 / KPA171202) (Propionibacterium acnes).